Consider the following 245-residue polypeptide: MKAGVAQQRSLLELAKLDAELTRIAHRATHLPQRAAYQQVQAEHNAANDRMAALRIAAEDLDGQVSRFESEIDAVRKRGDRDRSLLTSGATDAKQLADLQHELDSLQRRQASLEDALLEVLERREELQAQQTAESRALQALRADLAAAQQALDEALAEIDQARHQHSSQRDMLTATLDPELAGLYERQRAGGGPGAGRLQGHRCGACRIEIGRGELAQISAAAEDEVVRCPECGAILLRLEGFEE.

The stretch at 33–176 forms a coiled coil; sequence QRAAYQQVQA…SSQRDMLTAT (144 aa).

This is an uncharacterized protein from Mycobacterium tuberculosis (strain CDC 1551 / Oshkosh).